An 81-amino-acid polypeptide reads, in one-letter code: Large ribosomal subunit protein bL31 (81 aa).

Cys-16, Cys-18, Cys-38, and Cys-41 together coordinate Zn(2+).

The protein belongs to the bacterial ribosomal protein bL31 family. Type A subfamily. In terms of assembly, part of the 50S ribosomal subunit. Zn(2+) is required as a cofactor.

Binds the 23S rRNA. This is Large ribosomal subunit protein bL31 from Mycobacterium marinum (strain ATCC BAA-535 / M).